A 254-amino-acid chain; its full sequence is MEYFAKRIIPCLDVKDGRVVKGVNFVGLRDAGDPVEAAIRYNEEGADELTFLDITASHEGRKPIVDIVKEVAKEVFIPLTVGGGISELSDIYDLLNVGCDKVSINSAAVKNPDFINKSSKRFGSQCIVVAIDVKKIAPNKWHVFIKGGREDTGLDAIEWAKEVVDRGAGEILLTSMDTDGTKAGFDIEITEIISKLVHVPVIASGGAGKMEHFKEVFEHSADAALAASIFHFKEIDIMDLKQYLHKNNISVRIN.

Active-site residues include aspartate 13 and aspartate 132.

It belongs to the HisA/HisF family. In terms of assembly, heterodimer of HisH and HisF.

It localises to the cytoplasm. The catalysed reaction is 5-[(5-phospho-1-deoxy-D-ribulos-1-ylimino)methylamino]-1-(5-phospho-beta-D-ribosyl)imidazole-4-carboxamide + L-glutamine = D-erythro-1-(imidazol-4-yl)glycerol 3-phosphate + 5-amino-1-(5-phospho-beta-D-ribosyl)imidazole-4-carboxamide + L-glutamate + H(+). Its pathway is amino-acid biosynthesis; L-histidine biosynthesis; L-histidine from 5-phospho-alpha-D-ribose 1-diphosphate: step 5/9. Functionally, IGPS catalyzes the conversion of PRFAR and glutamine to IGP, AICAR and glutamate. The HisF subunit catalyzes the cyclization activity that produces IGP and AICAR from PRFAR using the ammonia provided by the HisH subunit. The sequence is that of Imidazole glycerol phosphate synthase subunit HisF from Nautilia profundicola (strain ATCC BAA-1463 / DSM 18972 / AmH).